The chain runs to 113 residues: Protein ZEO1 (113 aa).

Polar residues predominate over residues M1–Q16. Positions M1 to K96 are disordered. An N-acetylserine modification is found at S2. Phosphoserine is present on S2. Residues S2–E97 adopt a coiled-coil conformation. Over residues Q17–A37 the composition is skewed to basic and acidic residues. Glycyl lysine isopeptide (Lys-Gly) (interchain with G-Cter in ubiquitin) cross-links involve residues K18 and K23. S25 carries the phosphoserine modification. Residues K29 and K34 each participate in a glycyl lysine isopeptide (Lys-Gly) (interchain with G-Cter in ubiquitin) cross-link. S40 bears the Phosphoserine mark. Residue K45 forms a Glycyl lysine isopeptide (Lys-Gly) (interchain with G-Cter in ubiquitin) linkage. A Phosphothreonine modification is found at T49. The segment covering E53–K82 has biased composition (basic and acidic residues). Glycyl lysine isopeptide (Lys-Gly) (interchain with G-Cter in ubiquitin) cross-links involve residues K57 and K82.

In terms of assembly, interacts with MID2. Phosphorylation of Ser-25 is induced 2-fold in response to mating pheromone.

The protein localises to the cell membrane. Functionally, acts antagonistically to MID2 in signaling cell wall stress to the PKC1-MPK1 cell integrity pathway. The protein is Protein ZEO1 (ZEO1) of Saccharomyces cerevisiae (strain ATCC 204508 / S288c) (Baker's yeast).